Here is a 360-residue protein sequence, read N- to C-terminus: Alanine racemase (360 aa).

Residue Lys-34 is the Proton acceptor; specific for D-alanine of the active site. Position 34 is an N6-(pyridoxal phosphate)lysine (Lys-34). Residue Arg-129 participates in substrate binding. Tyr-254 functions as the Proton acceptor; specific for L-alanine in the catalytic mechanism. Met-302 contacts substrate.

This sequence belongs to the alanine racemase family. The cofactor is pyridoxal 5'-phosphate.

It carries out the reaction L-alanine = D-alanine. It functions in the pathway amino-acid biosynthesis; D-alanine biosynthesis; D-alanine from L-alanine: step 1/1. Functionally, catalyzes the interconversion of L-alanine and D-alanine. May also act on other amino acids. The protein is Alanine racemase (alr) of Pectobacterium atrosepticum (strain SCRI 1043 / ATCC BAA-672) (Erwinia carotovora subsp. atroseptica).